A 558-amino-acid chain; its full sequence is Urocanate hydratase (558 aa).

NAD(+) is bound by residues 50 to 51 (GG), Gln-128, 174 to 176 (GMG), Glu-194, Arg-199, 240 to 241 (NA), 261 to 265 (QTSAH), 271 to 272 (YI), and Tyr-320. Cys-408 is an active-site residue. Gly-490 is an NAD(+) binding site.

This sequence belongs to the urocanase family. It depends on NAD(+) as a cofactor.

It is found in the cytoplasm. The catalysed reaction is 4-imidazolone-5-propanoate = trans-urocanate + H2O. It participates in amino-acid degradation; L-histidine degradation into L-glutamate; N-formimidoyl-L-glutamate from L-histidine: step 2/3. In terms of biological role, catalyzes the conversion of urocanate to 4-imidazolone-5-propionate. The sequence is that of Urocanate hydratase from Deinococcus radiodurans (strain ATCC 13939 / DSM 20539 / JCM 16871 / CCUG 27074 / LMG 4051 / NBRC 15346 / NCIMB 9279 / VKM B-1422 / R1).